Here is a 248-residue protein sequence, read N- to C-terminus: UPF0328 protein ECU06_0030/ECU06_1690/ECU11_0020 (248 aa).

Disordered stretches follow at residues 1–34 (MVRHSKNILPKTTNPNPESNRYPPHPADPSHPSR) and 51–81 (ASAENRRRDPQNLSTTKATSPSTHQSPILPD). 2 stretches are compositionally biased toward polar residues: residues 10-19 (PKTTNPNPES) and 61-76 (QNLSTTKATSPSTHQS).

The protein belongs to the UPF0328 family.

The chain is UPF0328 protein ECU06_0030/ECU06_1690/ECU11_0020 from Encephalitozoon cuniculi (strain GB-M1) (Microsporidian parasite).